The chain runs to 412 residues: CCA-adding enzyme (412 aa).

ATP is bound by residues S41 and K44. Residues S41 and K44 each coordinate CTP. Mg(2+) contacts are provided by D53, D55, and D106. Residues H129, K149, and Y158 each coordinate ATP. 3 residues coordinate CTP: H129, K149, and Y158.

This sequence belongs to the tRNA nucleotidyltransferase/poly(A) polymerase family. Archaeal CCA-adding enzyme subfamily. As to quaternary structure, homodimer. Forms a tetramer upon binding two tRNAs. However, tRNA-induced tetramer formation is not required for CCA addition. Requires Mg(2+) as cofactor.

It catalyses the reaction a tRNA precursor + 2 CTP + ATP = a tRNA with a 3' CCA end + 3 diphosphate. It carries out the reaction a tRNA with a 3' CCA end + 2 CTP + ATP = a tRNA with a 3' CCACCA end + 3 diphosphate. In terms of biological role, catalyzes the addition and repair of the essential 3'-terminal CCA sequence in tRNAs without using a nucleic acid template. Adds these three nucleotides in the order of C, C, and A to the tRNA nucleotide-73, using CTP and ATP as substrates and producing inorganic pyrophosphate. tRNA 3'-terminal CCA addition is required both for tRNA processing and repair. Also involved in tRNA surveillance by mediating tandem CCA addition to generate a CCACCA at the 3' terminus of unstable tRNAs. While stable tRNAs receive only 3'-terminal CCA, unstable tRNAs are marked with CCACCA and rapidly degraded. The structural flexibility of RNA controls the choice between CCA versus CCACCA addition: following the first CCA addition cycle, nucleotide-binding to the active site triggers a clockwise screw motion, producing torque on the RNA. This ejects stable RNAs, whereas unstable RNAs are refolded while bound to the enzyme and subjected to a second CCA catalytic cycle. This chain is CCA-adding enzyme, found in Saccharolobus shibatae (strain ATCC 51178 / DSM 5389 / JCM 8931 / NBRC 15437 / B12) (Sulfolobus shibatae).